Here is a 325-residue protein sequence, read N- to C-terminus: Tetraacyldisaccharide 4'-kinase (325 aa).

Residue 55–62 (TAGGNGKT) coordinates ATP.

It belongs to the LpxK family.

The enzyme catalyses a lipid A disaccharide + ATP = a lipid IVA + ADP + H(+). It participates in glycolipid biosynthesis; lipid IV(A) biosynthesis; lipid IV(A) from (3R)-3-hydroxytetradecanoyl-[acyl-carrier-protein] and UDP-N-acetyl-alpha-D-glucosamine: step 6/6. Transfers the gamma-phosphate of ATP to the 4'-position of a tetraacyldisaccharide 1-phosphate intermediate (termed DS-1-P) to form tetraacyldisaccharide 1,4'-bis-phosphate (lipid IVA). The polypeptide is Tetraacyldisaccharide 4'-kinase (Salmonella enteritidis PT4 (strain P125109)).